The primary structure comprises 272 residues: Dermonecrotic toxin LvSicTox-alphaIC1bii (272 aa).

His5 is an active-site residue. Glu25 and Asp27 together coordinate Mg(2+). Catalysis depends on His41, which acts as the Nucleophile. Intrachain disulfides connect Cys45-Cys51 and Cys47-Cys189. Asp84 contacts Mg(2+).

This sequence belongs to the arthropod phospholipase D family. Class II subfamily. Mg(2+) serves as cofactor. As to expression, expressed by the venom gland.

It is found in the secreted. It carries out the reaction an N-(acyl)-sphingosylphosphocholine = an N-(acyl)-sphingosyl-1,3-cyclic phosphate + choline. It catalyses the reaction an N-(acyl)-sphingosylphosphoethanolamine = an N-(acyl)-sphingosyl-1,3-cyclic phosphate + ethanolamine. The catalysed reaction is a 1-acyl-sn-glycero-3-phosphocholine = a 1-acyl-sn-glycero-2,3-cyclic phosphate + choline. The enzyme catalyses a 1-acyl-sn-glycero-3-phosphoethanolamine = a 1-acyl-sn-glycero-2,3-cyclic phosphate + ethanolamine. Its function is as follows. Dermonecrotic toxins cleave the phosphodiester linkage between the phosphate and headgroup of certain phospholipids (sphingolipid and lysolipid substrates), forming an alcohol (often choline) and a cyclic phosphate. This toxin acts on sphingomyelin (SM). It may also act on ceramide phosphoethanolamine (CPE), lysophosphatidylcholine (LPC) and lysophosphatidylethanolamine (LPE), but not on lysophosphatidylserine (LPS), and lysophosphatidylglycerol (LPG). It acts by transphosphatidylation, releasing exclusively cyclic phosphate products as second products. Induces dermonecrosis, hemolysis, increased vascular permeability, edema, inflammatory response, and platelet aggregation. The sequence is that of Dermonecrotic toxin LvSicTox-alphaIC1bii from Loxosceles variegata (Recluse spider).